We begin with the raw amino-acid sequence, 448 residues long: Homogentisate 1,2-dioxygenase (448 aa).

Residues His340, Glu346, and His377 each contribute to the Fe cation site.

This sequence belongs to the homogentisate dioxygenase family. Requires Fe cation as cofactor.

It carries out the reaction homogentisate + O2 = 4-maleylacetoacetate + H(+). The protein operates within amino-acid degradation; L-phenylalanine degradation; acetoacetate and fumarate from L-phenylalanine: step 4/6. The protein is Homogentisate 1,2-dioxygenase (hmgA) of Emericella nidulans (strain FGSC A4 / ATCC 38163 / CBS 112.46 / NRRL 194 / M139) (Aspergillus nidulans).